The sequence spans 207 residues: ATP-dependent Clp protease proteolytic subunit (207 aa).

S111 acts as the Nucleophile in catalysis. Residue H136 is part of the active site.

This sequence belongs to the peptidase S14 family. Fourteen ClpP subunits assemble into 2 heptameric rings which stack back to back to give a disk-like structure with a central cavity, resembling the structure of eukaryotic proteasomes.

The protein resides in the cytoplasm. The enzyme catalyses Hydrolysis of proteins to small peptides in the presence of ATP and magnesium. alpha-casein is the usual test substrate. In the absence of ATP, only oligopeptides shorter than five residues are hydrolyzed (such as succinyl-Leu-Tyr-|-NHMec, and Leu-Tyr-Leu-|-Tyr-Trp, in which cleavage of the -Tyr-|-Leu- and -Tyr-|-Trp bonds also occurs).. Its function is as follows. Cleaves peptides in various proteins in a process that requires ATP hydrolysis. Has a chymotrypsin-like activity. Plays a major role in the degradation of misfolded proteins. The chain is ATP-dependent Clp protease proteolytic subunit from Aliivibrio fischeri (strain ATCC 700601 / ES114) (Vibrio fischeri).